Here is a 255-residue protein sequence, read N- to C-terminus: uncharacterized protein (255 aa).

The HTH deoR-type domain occupies 4–59 (RNERLNLIRKRVDQYGQVAVKDLAIFLQVTPETVRKDLETLENDKLITRTHGGAIQ). Positions 21–40 (VAVKDLAIFLQVTPETVRKD) form a DNA-binding region, H-T-H motif.

This is an uncharacterized protein from Staphylococcus epidermidis (strain ATCC 12228 / FDA PCI 1200).